A 2510-amino-acid chain; its full sequence is Highly reducing polyketide synthase g433 (2510 aa).

Residues 1 to 54 (MAPGRTDVTVAENGNGLHTAHNGVSNGTSNGTNGTSHTSNGTNSSAKTTSNGVH) are disordered. Positions 22-45 (NGVSNGTSNGTNGTSHTSNGTNSS) are enriched in low complexity. A Ketosynthase family 3 (KS3) domain is found at 58–477 (DIPIAIVGMG…GANAHAVIDS (420 aa)). Residues cysteine 229, histidine 365, and histidine 400 each act as for beta-ketoacyl synthase activity in the active site. Residues 574–880 (FVFTGQGAQW…VPTLVRGQND (307 aa)) form a malonyl-CoA:ACP transacylase (MAT) domain region. The tract at residues 942-1070 (HDLLGCQVFE…GQVKAGRADS (129 aa)) is N-terminal hotdog fold. The segment at 942–1226 (HDLLGCQVFE…NLRLAPAADD (285 aa)) is dehydratase (DH) domain. The PKS/mFAS DH domain occupies 942 to 1229 (HDLLGCQVFE…LAPAADDTGG (288 aa)). The active-site Proton acceptor; for dehydratase activity is histidine 974. The C-terminal hotdog fold stretch occupies residues 1083–1229 (PRKVSSTRWY…LAPAADDTGG (147 aa)). Aspartate 1144 serves as the catalytic Proton donor; for dehydratase activity. A methyltransferase (CMet) domain region spans residues 1395-1574 (DFLGLVSHDK…FDGAEAVIYD (180 aa)). Residues 1787–2097 (GSLKTLRWVQ…KGQHMGKLVI (311 aa)) are enoyl reductase (ER) (ER) domain. The segment at 2122 to 2296 (SYLLVGGLGG…ASVLDISIIE (175 aa)) is ketoreductase (KR) domain. A Carrier domain is found at 2419-2496 (SSVSFLANEI…KLGEAAAEGL (78 aa)). O-(pantetheine 4'-phosphoryl)serine is present on serine 2456.

The protein operates within mycotoxin biosynthesis. Functionally, highly reducing polyketide synthase; part of the gene cluster that mediates the biosynthesis of 1233A, a natural compound known as an inhibitor of HMG-CoA synthase in the mevalonate pathway and with antibacterial and antifungal activities. The highly reducing polyketide synthase g433 gene is responsible for the 1233A backbone biosynthesis and the cytochrome P450 monooxygenase g430 catalyzes oxidation of the backbone. This chain is Highly reducing polyketide synthase g433, found in Fusarium sp.